The chain runs to 442 residues: 23S rRNA (uracil(1939)-C(5))-methyltransferase RlmD (442 aa).

In terms of domain architecture, TRAM spans 10-75; the sequence is AKQTAKNCCK…RQYGRAKANK (66 aa). [4Fe-4S] cluster is bound by residues Cys-88, Cys-94, Cys-97, and Cys-173. Gln-276, Phe-305, Asn-310, Glu-326, Asn-353, and Asp-374 together coordinate S-adenosyl-L-methionine. The Nucleophile role is filled by Cys-400.

It belongs to the class I-like SAM-binding methyltransferase superfamily. RNA M5U methyltransferase family. RlmD subfamily.

It catalyses the reaction uridine(1939) in 23S rRNA + S-adenosyl-L-methionine = 5-methyluridine(1939) in 23S rRNA + S-adenosyl-L-homocysteine + H(+). Catalyzes the formation of 5-methyl-uridine at position 1939 (m5U1939) in 23S rRNA. In Haemophilus ducreyi (strain 35000HP / ATCC 700724), this protein is 23S rRNA (uracil(1939)-C(5))-methyltransferase RlmD.